A 186-amino-acid polypeptide reads, in one-letter code: UPF0301 protein CV_3909 (186 aa).

It belongs to the UPF0301 (AlgH) family.

The polypeptide is UPF0301 protein CV_3909 (Chromobacterium violaceum (strain ATCC 12472 / DSM 30191 / JCM 1249 / CCUG 213 / NBRC 12614 / NCIMB 9131 / NCTC 9757 / MK)).